A 497-amino-acid chain; its full sequence is tRNA-2-methylthio-N(6)-dimethylallyladenosine synthase (497 aa).

The MTTase N-terminal domain occupies 44–161 (KKVFVTTQGC…LPELYDQSHQ (118 aa)). [4Fe-4S] cluster-binding residues include C53, C90, C124, C205, C209, and C212. The region spanning 191–423 (RVEGFKAFVS…QKVIIDSTLA (233 aa)) is the Radical SAM core domain. Positions 426-494 (HEMVGTTTRV…PHMVKGEIEA (69 aa)) constitute a TRAM domain.

It belongs to the methylthiotransferase family. MiaB subfamily. As to quaternary structure, monomer. [4Fe-4S] cluster is required as a cofactor.

It localises to the cytoplasm. It carries out the reaction N(6)-dimethylallyladenosine(37) in tRNA + (sulfur carrier)-SH + AH2 + 2 S-adenosyl-L-methionine = 2-methylsulfanyl-N(6)-dimethylallyladenosine(37) in tRNA + (sulfur carrier)-H + 5'-deoxyadenosine + L-methionine + A + S-adenosyl-L-homocysteine + 2 H(+). Catalyzes the methylthiolation of N6-(dimethylallyl)adenosine (i(6)A), leading to the formation of 2-methylthio-N6-(dimethylallyl)adenosine (ms(2)i(6)A) at position 37 in tRNAs that read codons beginning with uridine. This chain is tRNA-2-methylthio-N(6)-dimethylallyladenosine synthase, found in Psychrobacter cryohalolentis (strain ATCC BAA-1226 / DSM 17306 / VKM B-2378 / K5).